We begin with the raw amino-acid sequence, 120 residues long: Xibalbin-1 (120 aa).

An N-terminal signal peptide occupies residues 1–21 (MISKILIAACALLLISHLVLA). Positions 22–63 (VPYLEDGLNSLHNRTGESDETRGYTIQLLKEMPEDDAVEDYS) are excised as a propeptide. 4 disulfides stabilise this stretch: C79–C94, C86–C99, C93–C110, and C101–C108.

This sequence belongs to the xibalbin-1 family. Expressed by the venom gland. Not found in the whole body.

It is found in the secreted. In terms of biological role, probable neurotoxin. Strongly inhibits voltage-gated potassium channels (Kv1.1/KCNA1, Kv1.2/KCNA2, Kv1.3/KCNA3, and Kv1.6/KCNA6, with the highest toxicity against Kv1.6 (74% inhibition at 1 uM)) and mildly inhibits sodium channels (Nav1.2/SCN2A, Nav1.4/SCN4A, Nav1.5/SCN5A, Nav1.6/SCN8A, and BgNav). Induces activation of protein kinase A type II (PKA-II) and MAP kinase Erk1/2 in primary nociceptive and non-nociceptive sensory neurons. Does not show cytotoxic activity. Does not have an impact on Ca2+, cAMP, and NO signaling in the cell types analyzed. Does not interfere with the adhesion of leukocytes to endothelial cells. This chain is Xibalbin-1, found in Xibalbanus tulumensis (Blind cave remipede).